Here is a 420-residue protein sequence, read N- to C-terminus: Tyrosine--tRNA ligase (420 aa).

Tyr36 serves as a coordination point for L-tyrosine. The short motif at 41 to 50 (PTADSLHIGH) is the 'HIGH' region element. Positions 170 and 174 each coordinate L-tyrosine. The short motif at 231–235 (KFGKT) is the 'KMSKS' region element. Lys234 lines the ATP pocket. Positions 353–420 (RNIVEVIVET…KKKYFMVNYK (68 aa)) constitute an S4 RNA-binding domain.

The protein belongs to the class-I aminoacyl-tRNA synthetase family. TyrS type 1 subfamily. Homodimer.

It is found in the cytoplasm. The enzyme catalyses tRNA(Tyr) + L-tyrosine + ATP = L-tyrosyl-tRNA(Tyr) + AMP + diphosphate + H(+). In terms of biological role, catalyzes the attachment of tyrosine to tRNA(Tyr) in a two-step reaction: tyrosine is first activated by ATP to form Tyr-AMP and then transferred to the acceptor end of tRNA(Tyr). This Staphylococcus saprophyticus subsp. saprophyticus (strain ATCC 15305 / DSM 20229 / NCIMB 8711 / NCTC 7292 / S-41) protein is Tyrosine--tRNA ligase.